We begin with the raw amino-acid sequence, 306 residues long: GTP cyclohydrolase FolE2 (306 aa).

Belongs to the GTP cyclohydrolase IV family.

The catalysed reaction is GTP + H2O = 7,8-dihydroneopterin 3'-triphosphate + formate + H(+). Its pathway is cofactor biosynthesis; 7,8-dihydroneopterin triphosphate biosynthesis; 7,8-dihydroneopterin triphosphate from GTP: step 1/1. In terms of biological role, converts GTP to 7,8-dihydroneopterin triphosphate. The polypeptide is GTP cyclohydrolase FolE2 (Pseudoalteromonas atlantica (strain T6c / ATCC BAA-1087)).